The sequence spans 210 residues: SAP domain-containing ribonucleoprotein (210 aa).

Alanine 2 bears the N-acetylalanine mark. The SAP domain maps to 8 to 42 (LHKLKLAELKQECLARGLETKGIKQDLINRLQAYL). Residue lysine 10 is modified to N6-acetyllysine. Residues 45-64 (HAEEEANEEDVLGDETEEEE) are compositionally biased toward acidic residues. The disordered stretch occupies residues 45–87 (HAEEEANEEDVLGDETEEEEPKPIELPVKEEEPPEKAVDMASE). Over residues 65-87 (PKPIELPVKEEEPPEKAVDMASE) the composition is skewed to basic and acidic residues. Lysine 142 carries the N6-acetyllysine modification. The interval 162 to 210 (SSISRKSEDDEKLKKRKERFGIVTSSAGTGTTEDTEAKKRKRAERFGIA) is disordered. Serine 163 bears the Phosphoserine mark. Positions 184–193 (VTSSAGTGTT) are enriched in polar residues.

Belongs to the SAP domain-containing ribonucleoprotein family. Interacts with DDX39A. Interacts with FUS. Interacts (via the C-terminal domain) with DDX39B; the interaction is direct and facilitates RNA binding of DDX39B. Component of the transcription/export (TREX) complex at least composed of ALYREF/THOC4, DDX39B, SARNP/CIP29, CHTOP and the THO subcomplex; TREX seems to have dynamic structure involving ATP-dependent remodeling; in the complex interacts directly with DDX39B in a ATP-dependent manner which bridges it to ALYREF/THOC4.

Its subcellular location is the nucleus. It is found in the nucleus speckle. Functionally, binds both single-stranded and double-stranded DNA with higher affinity for the single-stranded form. Specifically binds to scaffold/matrix attachment region DNA. Also binds single-stranded RNA. Enhances RNA unwinding activity of DDX39A. May participate in important transcriptional or translational control of cell growth, metabolism and carcinogenesis. Component of the TREX complex which is thought to couple mRNA transcription, processing and nuclear export, and specifically associates with spliced mRNA and not with unspliced pre-mRNA. The TREX complex is recruited to spliced mRNAs by a transcription-independent mechanism, binds to mRNA upstream of the exon-junction complex (EJC) and is recruited in a splicing- and cap-dependent manner to a region near the 5' end of the mRNA where it functions in mRNA export to the cytoplasm via the TAP/NXF1 pathway. Associates with DDX39B, which facilitates RNA binding of DDX39B and likely plays a role in mRNA export. This Mus musculus (Mouse) protein is SAP domain-containing ribonucleoprotein (Sarnp).